The primary structure comprises 596 residues: Jacalin-related lectin 46 (596 aa).

The segment at 1-20 (MTERSEALGKDGNRRWDDKS) is disordered. Jacalin-type lectin domains lie at 2 to 143 (TERS…YFTR), 146 to 291 (PTRI…YFTP), 294 to 439 (PTKS…HFYP), and 446 to 592 (AEKL…HVLP).

It belongs to the jacalin lectin family.

This chain is Jacalin-related lectin 46 (JAL46), found in Arabidopsis thaliana (Mouse-ear cress).